The following is a 206-amino-acid chain: Small ribosomal subunit protein uS4A (206 aa).

The 67-residue stretch at 98–164 (MRLDNVVYKL…EKFKTFAENP (67 aa)) folds into the S4 RNA-binding domain.

It belongs to the universal ribosomal protein uS4 family. Part of the 30S ribosomal subunit. Contacts protein S5. The interaction surface between S4 and S5 is involved in control of translational fidelity.

Functionally, one of the primary rRNA binding proteins, it binds directly to 16S rRNA where it nucleates assembly of the body of the 30S subunit. In terms of biological role, with S5 and S12 plays an important role in translational accuracy. This is Small ribosomal subunit protein uS4A from Clostridium novyi (strain NT).